The following is a 156-amino-acid chain: Small ribosomal subunit protein uS7 (156 aa).

Belongs to the universal ribosomal protein uS7 family. In terms of assembly, part of the 30S ribosomal subunit. Contacts proteins S9 and S11.

One of the primary rRNA binding proteins, it binds directly to 16S rRNA where it nucleates assembly of the head domain of the 30S subunit. Is located at the subunit interface close to the decoding center, probably blocks exit of the E-site tRNA. In Syntrophomonas wolfei subsp. wolfei (strain DSM 2245B / Goettingen), this protein is Small ribosomal subunit protein uS7.